Consider the following 501-residue polypeptide: Cyclin-dependent kinase 19 (501 aa).

Position 1 is an N-acetylmethionine (methionine 1). Residues 21 to 335 (EYEGCKVGRG…SEQALQDPYF (315 aa)) enclose the Protein kinase domain. Residues 27 to 35 (VGRGTYGHV) and lysine 52 each bind ATP. Aspartate 151 (proton acceptor) is an active-site residue. The disordered stretch occupies residues 362-501 (DEPEEKGDKN…YHSSHQTHRY (140 aa)). A compositionally biased stretch (low complexity) spans 371–392 (NQPQQQNPHQQPAAPAQQTAAP). Over residues 408 to 421 (TAGGATAGGGGAGA) the composition is skewed to gly residues. A Phosphoserine modification is found at serine 449. Residues 467–495 (YQSSVQGSSQSQSTLGYSSSQQSTQYHSS) are compositionally biased toward low complexity.

The protein belongs to the protein kinase superfamily. CMGC Ser/Thr protein kinase family. CDC2/CDKX subfamily.

It localises to the cytoplasm. It is found in the perinuclear region. Its subcellular location is the nucleus. The catalysed reaction is L-seryl-[protein] + ATP = O-phospho-L-seryl-[protein] + ADP + H(+). It carries out the reaction L-threonyl-[protein] + ATP = O-phospho-L-threonyl-[protein] + ADP + H(+). The polypeptide is Cyclin-dependent kinase 19 (Cdk19) (Mus musculus (Mouse)).